A 114-amino-acid polypeptide reads, in one-letter code: Nucleoid-associated protein MAE_23910 (114 aa).

It belongs to the YbaB/EbfC family. Homodimer.

The protein resides in the cytoplasm. It localises to the nucleoid. Binds to DNA and alters its conformation. May be involved in regulation of gene expression, nucleoid organization and DNA protection. The sequence is that of Nucleoid-associated protein MAE_23910 from Microcystis aeruginosa (strain NIES-843 / IAM M-2473).